The following is a 558-amino-acid chain: Urocanate hydratase (558 aa).

NAD(+)-binding positions include 54 to 55 (GG), Gln132, 178 to 180 (GMG), Glu198, 244 to 245 (NA), 265 to 269 (QTSAH), 275 to 276 (YL), and Tyr324. Cys412 is a catalytic residue. Residue Gly494 coordinates NAD(+).

This sequence belongs to the urocanase family. NAD(+) serves as cofactor.

Its subcellular location is the cytoplasm. It carries out the reaction 4-imidazolone-5-propanoate = trans-urocanate + H2O. It functions in the pathway amino-acid degradation; L-histidine degradation into L-glutamate; N-formimidoyl-L-glutamate from L-histidine: step 2/3. Its function is as follows. Catalyzes the conversion of urocanate to 4-imidazolone-5-propionate. The sequence is that of Urocanate hydratase from Acinetobacter baumannii (strain ACICU).